Reading from the N-terminus, the 97-residue chain is Small, acid-soluble spore protein gamma-type (97 aa).

The segment covering Met-1 to Val-42 has biased composition (polar residues). The segment at Met-1–Gly-97 is disordered. 2 consecutive repeats follow at residues Gln-23–Asn-56 and Gln-58–Asn-91. Residues Lys-43–Asn-63 are compositionally biased toward low complexity. A compositionally biased stretch (polar residues) spans Ala-69 to Arg-78. Residues Gln-79–Asn-91 show a composition bias toward low complexity.

This sequence belongs to the gamma-type SASP family.

SASP are proteins degraded in the first minutes of spore germination and provide amino acids for both new protein synthesis and metabolism. These proteins may be involved in dormant spore's high resistance to UV light. In Priestia megaterium (Bacillus megaterium), this protein is Small, acid-soluble spore protein gamma-type (sasP-B).